The primary structure comprises 75 residues: MGMSKSIKVILSLALVVFLALAATKVEATRYITYPAIDRGDHAVHCDKAHPNTCKKKEANPYQRGCEKINRCRGG.

A signal peptide spans 1 to 28 (MGMSKSIKVILSLALVVFLALAATKVEA). 2 disulfide bridges follow: cysteine 46/cysteine 54 and cysteine 66/cysteine 72.

The protein belongs to the plant rapid alkalinization factor (RALF) family.

The protein localises to the secreted. In terms of biological role, cell signaling peptide that may regulate plant stress, growth, and development. Mediates a rapid alkalinization of extracellular space by mediating a transient increase in the cytoplasmic Ca(2+) concentration leading to a calcium-dependent signaling events through a cell surface receptor and a concomitant activation of some intracellular mitogen-activated protein kinases. The chain is Protein RALF-like 9 (RALFL9) from Arabidopsis thaliana (Mouse-ear cress).